Consider the following 297-residue polypeptide: GTPase Era (297 aa).

The Era-type G domain maps to 7–174 (RSGFVSIVGR…VQLVHGLLPE (168 aa)). The tract at residues 15–22 (GRPNVGKS) is G1. GTP is bound at residue 15–22 (GRPNVGKS). Positions 41 to 45 (QTTRN) are G2. The segment at 62 to 65 (DTPG) is G3. GTP contacts are provided by residues 62-66 (DTPGI) and 124-127 (NKID). A G4 region spans residues 124-127 (NKID). Positions 153–155 (VSA) are G5. The KH type-2 domain occupies 205 to 282 (THDEVPYSTA…FLELFVRVSG (78 aa)).

Belongs to the TRAFAC class TrmE-Era-EngA-EngB-Septin-like GTPase superfamily. Era GTPase family. As to quaternary structure, monomer.

It is found in the cytoplasm. The protein localises to the cell inner membrane. Its function is as follows. An essential GTPase that binds both GDP and GTP, with rapid nucleotide exchange. Plays a role in 16S rRNA processing and 30S ribosomal subunit biogenesis and possibly also in cell cycle regulation and energy metabolism. In Geobacter sp. (strain M21), this protein is GTPase Era.